We begin with the raw amino-acid sequence, 326 residues long: tRNA U34 carboxymethyltransferase (326 aa).

Carboxy-S-adenosyl-L-methionine is bound by residues Lys95, Trp109, Lys114, Gly134, 184-185 (VE), Tyr204, and Arg319.

It belongs to the class I-like SAM-binding methyltransferase superfamily. CmoB family.

The catalysed reaction is carboxy-S-adenosyl-L-methionine + 5-hydroxyuridine(34) in tRNA = 5-carboxymethoxyuridine(34) in tRNA + S-adenosyl-L-homocysteine + H(+). In terms of biological role, catalyzes carboxymethyl transfer from carboxy-S-adenosyl-L-methionine (Cx-SAM) to 5-hydroxyuridine (ho5U) to form 5-carboxymethoxyuridine (cmo5U) at position 34 in tRNAs. The chain is tRNA U34 carboxymethyltransferase from Trichodesmium erythraeum (strain IMS101).